Here is a 251-residue protein sequence, read N- to C-terminus: L-ascorbate peroxidase 2, cytosolic (251 aa).

H43 functions as the Proton acceptor in the catalytic mechanism. H163 is a heme b binding site. K(+) is bound by residues T164, T180, N182, I185, and D187.

It belongs to the peroxidase family. Ascorbate peroxidase subfamily. The cofactor is heme b. In terms of tissue distribution, detected in bundle sheath cells, the photosynthetic cells that surround the phloem and xylem.

It is found in the cytoplasm. It catalyses the reaction L-ascorbate + H2O2 = L-dehydroascorbate + 2 H2O. In terms of biological role, plays a key role in hydrogen peroxide removal. The protein is L-ascorbate peroxidase 2, cytosolic of Arabidopsis thaliana (Mouse-ear cress).